A 704-amino-acid chain; its full sequence is Elongation factor G 1 (704 aa).

The region spanning 8–285 is the tr-type G domain; the sequence is EKIRNIGISA…AVCAFLPNPK (278 aa). GTP-binding positions include 17–24, 84–88, and 138–141; these read AHIDSGKT, DTPGH, and NKMD.

The protein belongs to the TRAFAC class translation factor GTPase superfamily. Classic translation factor GTPase family. EF-G/EF-2 subfamily.

The protein localises to the cytoplasm. In terms of biological role, catalyzes the GTP-dependent ribosomal translocation step during translation elongation. During this step, the ribosome changes from the pre-translocational (PRE) to the post-translocational (POST) state as the newly formed A-site-bound peptidyl-tRNA and P-site-bound deacylated tRNA move to the P and E sites, respectively. Catalyzes the coordinated movement of the two tRNA molecules, the mRNA and conformational changes in the ribosome. This chain is Elongation factor G 1, found in Myxococcus xanthus (strain DK1622).